The primary structure comprises 75 residues: U6-lycotoxin-Ls1d (75 aa).

The N-terminal stretch at 1–21 (MKLLLFTALVLVVISLIEVEA) is a signal peptide. Residues 22–25 (ENER) constitute a propeptide that is removed on maturation.

It belongs to the neurotoxin 19 (CSTX) family. 06 (U6-Lctx) subfamily. In terms of processing, contains 4 disulfide bonds. As to expression, expressed by the venom gland.

The protein localises to the secreted. This Lycosa singoriensis (Wolf spider) protein is U6-lycotoxin-Ls1d.